Consider the following 268-residue polypeptide: Tryptophan synthase alpha chain (268 aa).

Active-site proton acceptor residues include glutamate 49 and aspartate 60.

The protein belongs to the TrpA family. Tetramer of two alpha and two beta chains.

It catalyses the reaction (1S,2R)-1-C-(indol-3-yl)glycerol 3-phosphate + L-serine = D-glyceraldehyde 3-phosphate + L-tryptophan + H2O. The protein operates within amino-acid biosynthesis; L-tryptophan biosynthesis; L-tryptophan from chorismate: step 5/5. Its function is as follows. The alpha subunit is responsible for the aldol cleavage of indoleglycerol phosphate to indole and glyceraldehyde 3-phosphate. The polypeptide is Tryptophan synthase alpha chain (Salmonella agona (strain SL483)).